The sequence spans 706 residues: uncharacterized protein (706 aa).

Coiled-coil stretches lie at residues 86-162 (TKNV…AKKI), 269-299 (DYLK…VNEL), and 337-427 (DDYI…QSDY).

This is an uncharacterized protein from Staphylococcus aureus (strain MRSA252).